The following is a 123-amino-acid chain: Large ribosomal subunit protein uL14 (123 aa).

It belongs to the universal ribosomal protein uL14 family. As to quaternary structure, part of the 50S ribosomal subunit. Forms a cluster with proteins L3 and L19. In the 70S ribosome, L14 and L19 interact and together make contacts with the 16S rRNA in bridges B5 and B8.

In terms of biological role, binds to 23S rRNA. Forms part of two intersubunit bridges in the 70S ribosome. This chain is Large ribosomal subunit protein uL14, found in Histophilus somni (strain 129Pt) (Haemophilus somnus).